A 293-amino-acid chain; its full sequence is Putative phosphoenolpyruvate synthase regulatory protein (293 aa).

173 to 180 (GVSRCGKT) lines the ADP pocket.

It belongs to the pyruvate, phosphate/water dikinase regulatory protein family. PSRP subfamily.

The catalysed reaction is [pyruvate, water dikinase] + ADP = [pyruvate, water dikinase]-phosphate + AMP + H(+). The enzyme catalyses [pyruvate, water dikinase]-phosphate + phosphate + H(+) = [pyruvate, water dikinase] + diphosphate. Its function is as follows. Bifunctional serine/threonine kinase and phosphorylase involved in the regulation of the phosphoenolpyruvate synthase (PEPS) by catalyzing its phosphorylation/dephosphorylation. The polypeptide is Putative phosphoenolpyruvate synthase regulatory protein (Photorhabdus laumondii subsp. laumondii (strain DSM 15139 / CIP 105565 / TT01) (Photorhabdus luminescens subsp. laumondii)).